Here is a 259-residue protein sequence, read N- to C-terminus: Global transcriptional regulator CodY (259 aa).

The tract at residues 1 to 155 is GAF domain; the sequence is MNLLEKTRKI…GATVVGMEIL (155 aa). The segment at residues 203-222 is a DNA-binding region (H-T-H motif); it reads ASKIADRVGITRSVIVNALR. Position 215 is a phosphoserine (Ser-215).

The protein belongs to the CodY family.

It localises to the cytoplasm. In terms of biological role, DNA-binding global transcriptional regulator which is involved in the adaptive response to starvation and acts by directly or indirectly controlling the expression of numerous genes in response to nutrient availability. During rapid exponential growth, CodY is highly active and represses genes whose products allow adaptation to nutrient depletion. The sequence is that of Global transcriptional regulator CodY from Lysinibacillus sphaericus (strain C3-41).